The sequence spans 695 residues: Protein MALE DISCOVERER 1 (695 aa).

Residues 1–29 (MGCRWNPIGFQFSCFMFLIITLQSRSSLS) form the signal peptide. Topologically, residues 30 to 340 (LESEGFVLLK…SKGFKDVWLY (311 aa)) are extracellular. Residues Asn-56 and Asn-80 are each glycosylated (N-linked (GlcNAc...) asparagine). LRR repeat units lie at residues 75 to 98 (KVQM…SQLS), 99 to 121 (ELRS…FASF), 123 to 144 (KLEF…ELNK), and 147 to 168 (TPEN…KFLR). N-linked (GlcNAc...) asparagine glycosylation occurs at Asn-247. Residues 302-325 (PPLIPPSSPPPLPTNNTIASDPPR) are disordered. The span at 303-314 (PLIPPSSPPPLP) shows a compositional bias: pro residues. The N-linked (GlcNAc...) asparagine glycan is linked to Asn-316. A helical membrane pass occupies residues 341–361 (VVIGVAAFVAMLIIVAVIFFF). The Cytoplasmic segment spans residues 362–695 (RKRAVKSIGP…ELEILSSEAT (334 aa)). Positions 363–668 (KRAVKSIGPW…YVVQQLKEVI (306 aa)) constitute a Protein kinase domain. Ser-652 carries the phosphoserine modification.

It belongs to the protein kinase superfamily. Ser/Thr protein kinase family. As to quaternary structure, homodimer. Interacts with MIK1, MIK2 and LURE1.2. LURE1.2 enhances the heterodimerization of MDIS1 with MIK1 or MIK2. Phosphorylated by MIK1. Expressed in pollen tubes and seedlings.

It localises to the cell membrane. The protein localises to the endomembrane system. It catalyses the reaction L-seryl-[protein] + ATP = O-phospho-L-seryl-[protein] + ADP + H(+). The enzyme catalyses L-threonyl-[protein] + ATP = O-phospho-L-threonyl-[protein] + ADP + H(+). Functionally, involved in the pollen tube perception of the female signal. This Arabidopsis thaliana (Mouse-ear cress) protein is Protein MALE DISCOVERER 1.